The sequence spans 620 residues: MATREHELRPEQERLGEDREEYEDGEEEEEEEEEEEGWDDWESDGDDAGGGGGGLLCLFCSARFDSESSLFSHCASEHRFDFYRVVKETGMDFYGCIKLINFVRSKVAENKCWSCGQVFSSNSELCGHLHALEIPQLEGKVPWGDDVYLKPFLEDDSLLHSLSVFDDDDEDDCGMPMEKGGCSAGNGSLAETCESNLKSIINDGSDVIDRFERTCTIESTDGECSGSLAQEPSDKQLKIARASAAARGINSVDESYFGSYSSFGIHREMLGDKVRTEAYRDALLGNPSLMNGATVLDVGCGTGILSLFAAKAGASRVIAVDGSAKMVSVATEVTKSNGFLYDENMEMQQKRDTQVITVVHTKAEELNHKIQVPSNKFDVLVSEWMGYCLLYESMLSSVLYARDHFLKPGGAILPDTATIFGAGFGKGGTSLPFWENVYGFDMSCIGKEVTGNSARFPVVDILASEDIVTETAVLNSFDLATMKENEMDFTSSFELRLSESGVSPSGVTWCYGIILWFDTGFTNRFCKEKPVNLSTSPFSTPTHWSQTIFTFEEPIAMAKEESAVVSSASVGTDECPAVMIRSRISIVRASEHRSIDISIETTGISSDGRKRSWPVQIFNL.

Residues 1–17 (MATREHELRPEQERLGE) show a composition bias toward basic and acidic residues. The interval 1–45 (MATREHELRPEQERLGEDREEYEDGEEEEEEEEEEEGWDDWESDG) is disordered. Acidic residues predominate over residues 18–45 (DREEYEDGEEEEEEEEEEEGWDDWESDG). The C2H2-type 1 zinc finger occupies 55–78 (LLCLFCSARFDSESSLFSHCASEH). Residues 110–137 (NKCWSCGQVFSSNSELCGHLHALEIPQL) form a C2H2-type 2; degenerate zinc finger. One can recognise an SAM-dependent MTase PRMT-type domain in the interval 253–582 (DESYFGSYSS…DECPAVMIRS (330 aa)). S-adenosyl-L-homocysteine-binding residues include R275, G299, D321, S323, and E364. Residues E383 and E392 contribute to the active site.

It belongs to the class I-like SAM-binding methyltransferase superfamily. Protein arginine N-methyltransferase family.

The protein localises to the cytoplasm. It localises to the cytosol. It catalyses the reaction L-arginyl-[protein] + S-adenosyl-L-methionine = N(omega)-methyl-L-arginyl-[protein] + S-adenosyl-L-homocysteine + H(+). The enzyme catalyses L-arginyl-[protein] + 2 S-adenosyl-L-methionine = N(omega),N(omega)-dimethyl-L-arginyl-[protein] + 2 S-adenosyl-L-homocysteine + 2 H(+). Protein-arginine N-methyltransferase that catalyzes both the monomethylation and asymmetric dimethylation of the guanidino nitrogens of arginine residues in target proteins, and therefore falls into the group of type I methyltransferases. This chain is Probable protein arginine N-methyltransferase 3 (PRMT3), found in Oryza sativa subsp. indica (Rice).